Here is a 535-residue protein sequence, read N- to C-terminus: Importin subunit alpha-2 (535 aa).

The region spanning 1–58 (MSLRPNAKTEVRRNRYKVAVDAEEGRRRREDNMVEIRKSKREESLQKKRREGLQANQL) is the IBB domain. Over residues 20 to 46 (VDAEEGRRRREDNMVEIRKSKREESLQ) the composition is skewed to basic and acidic residues. The segment at 20-67 (VDAEEGRRRREDNMVEIRKSKREESLQKKRREGLQANQLPQFAPSPVP) is disordered. 10 ARM repeats span residues 67 to 106 (PASS…KLLS), 110 to 150 (SPPI…NIAS), 153 to 192 (SENT…NVAG), 195 to 235 (PRCR…NFCR), 237 to 276 (KPQP…YLSD), 279 to 318 (NDKI…NIVT), 321 to 361 (DLQT…NITA), 364 to 403 (RDQI…NATS), 407 to 446 (PDQI…NILK), and 461 to 500 (NFYA…TYWL).

Belongs to the importin alpha family. As to quaternary structure, forms a complex with the importin subunit beta-1 KPNB1. Interacts with A.tumefaciens VirD2 and VirE2. Binds to SWO1.

It localises to the nucleus envelope. Binds to conventional NLS motifs and mediates nuclear protein import across the nuclear envelope. Involved in the maintenance of cell wall integrity under salt stress via interaction with SWO1. Acts as a cellular receptor for the nuclear import of the virD2 protein of Agrobacterium, but is not essential for Agrobacterium-mediated root transformation. The sequence is that of Importin subunit alpha-2 from Arabidopsis thaliana (Mouse-ear cress).